We begin with the raw amino-acid sequence, 104 residues long: MAHHEVISRSGNAFLLNIRESVLLPGSMSEMHFFLLIGISSIHSDRVILAMKDYLVGGHSRKEVCEKYQMNNGYFSTTLGRLIRLNALAARLAPYYTDESSAFD.

The protein resides in the cytoplasm. Its function is as follows. May act as both positive and negative regulator of pap transcription. Might positively regulate levels of papI and/or mbf. Its autoregulatory mode of action involves differential binding to separate sites. This Escherichia coli protein is Major pilu subunit operon regulatory protein PapB (papB).